The primary structure comprises 222 residues: ATP synthase F(0) complex subunit a (222 aa).

The next 6 membrane-spanning stretches (helical) occupy residues 8 to 28, 64 to 84, 93 to 113, 127 to 147, 160 to 180, and 197 to 219; these read FFYV…ILLP, WSLM…LGLL, QLTV…VPGF, QGTP…SLLI, ITAG…LSSI, and ILEL…LYLH.

This sequence belongs to the ATPase A chain family. Component of the ATP synthase complex composed at least of ATP5F1A/subunit alpha, ATP5F1B/subunit beta, ATP5MC1/subunit c (homooctomer), MT-ATP6/subunit a, MT-ATP8/subunit 8, ATP5ME/subunit e, ATP5MF/subunit f, ATP5MG/subunit g, ATP5MK/subunit k, ATP5MJ/subunit j, ATP5F1C/subunit gamma, ATP5F1D/subunit delta, ATP5F1E/subunit epsilon, ATP5PF/subunit F6, ATP5PB/subunit b, ATP5PD/subunit d, ATP5PO/subunit OSCP. ATP synthase complex consists of a soluble F(1) head domain (subunits alpha(3) and beta(3)) - the catalytic core - and a membrane F(0) domain - the membrane proton channel (subunits c, a, 8, e, f, g, k and j). These two domains are linked by a central stalk (subunits gamma, delta, and epsilon) rotating inside the F1 region and a stationary peripheral stalk (subunits F6, b, d, and OSCP). Interacts with DNAJC30; interaction is direct.

It localises to the mitochondrion inner membrane. The catalysed reaction is H(+)(in) = H(+)(out). Functionally, subunit a, of the mitochondrial membrane ATP synthase complex (F(1)F(0) ATP synthase or Complex V) that produces ATP from ADP in the presence of a proton gradient across the membrane which is generated by electron transport complexes of the respiratory chain. ATP synthase complex consist of a soluble F(1) head domain - the catalytic core - and a membrane F(1) domain - the membrane proton channel. These two domains are linked by a central stalk rotating inside the F(1) region and a stationary peripheral stalk. During catalysis, ATP synthesis in the catalytic domain of F(1) is coupled via a rotary mechanism of the central stalk subunits to proton translocation. With the subunit c (ATP5MC1), forms the proton-conducting channel in the F(0) domain, that contains two crucial half-channels (inlet and outlet) that facilitate proton movement from the mitochondrial intermembrane space (IMS) into the matrix. Protons are taken up via the inlet half-channel and released through the outlet half-channel, following a Grotthuss mechanism. This Loxodonta africana (African elephant) protein is ATP synthase F(0) complex subunit a.